The following is a 379-amino-acid chain: tRNA-specific 2-thiouridylase MnmA (379 aa).

ATP contacts are provided by residues 9-16 (AMSGGVDS) and M35. Residues 94–96 (NPD) form an interaction with target base in tRNA region. Residue C99 is the Nucleophile of the active site. C99 and C195 are joined by a disulfide. Position 123 (G123) interacts with ATP. The interval 145–147 (KDQ) is interaction with tRNA. C195 serves as the catalytic Cysteine persulfide intermediate. The segment at 307 to 308 (RY) is interaction with tRNA.

Belongs to the MnmA/TRMU family.

The protein localises to the cytoplasm. The enzyme catalyses S-sulfanyl-L-cysteinyl-[protein] + uridine(34) in tRNA + AH2 + ATP = 2-thiouridine(34) in tRNA + L-cysteinyl-[protein] + A + AMP + diphosphate + H(+). In terms of biological role, catalyzes the 2-thiolation of uridine at the wobble position (U34) of tRNA, leading to the formation of s(2)U34. This is tRNA-specific 2-thiouridylase MnmA from Xylella fastidiosa (strain 9a5c).